The following is a 605-amino-acid chain: Protein ZRG17 (605 aa).

At 1–225 the chain is on the cytoplasmic side; it reads METPQMNAIQ…DLLSNLPWPK (225 aa). Phosphoserine is present on residues Ser-16 and Ser-131. Residues 118 to 178 form a disordered region; sequence PAPKLVPPPP…PSSAASRTSF (61 aa). The segment covering 143-176 has biased composition (polar residues); it reads SKRSSMTLDSPFNFTTSTLQPHQQTPPSSAASRT. A helical membrane pass occupies residues 226 to 246; sequence AYIQLSIAALQIFACLITFQV. Over 247–254 the chain is Lumenal; sequence GHLYSWSN. The helical transmembrane segment at 255–275 threads the bilayer; the sequence is FITLSHFITYDIIGSLVIIFV. Over 276 to 287 the chain is Cytoplasmic; it reads ENLSQFQVWFTG. Residues 288 to 308 traverse the membrane as a helical segment; it reads TITFPFGLNRIDVLLSFALAV. Ser-309 is a topological domain (lumenal). The chain crosses the membrane as a helical span at residues 310–330; the sequence is LCFVGLDLLFHIIEEFIVLFV. The Cytoplasmic portion of the chain corresponds to 331 to 363; that stretch reads ESGSSLTNNHDHDEINEQIPHSHIANANDSQNE. Residues 364 to 384 form a helical membrane-spanning segment; sequence NITLWYSILMINLVLSTLSLY. Residues 385–399 lie on the Lumenal side of the membrane; it reads KTFYANKYSNLKTKN. A helical membrane pass occupies residues 400-420; that stretch reads PIITITYTAYLFIYPLLLDLL. Topologically, residues 421–422 are cytoplasmic; it reads SS. Residues 423-443 traverse the membrane as a helical segment; sequence ISDYLATLVISSLILWHGLTI. The Lumenal portion of the chain corresponds to 444–545; it reads ARWTSTVLLM…ERLSEFKSRY (102 aa). Polar residues predominate over residues 473-482; it reads DTTAHTQQVE. Positions 473-497 are disordered; it reads DTTAHTQQVESKAAKEKPSVRPRSM. Ser-498 carries the phosphoserine modification. Residues 546 to 566 form a helical membrane-spanning segment; it reads ILNYDDIVISKVNFTLYVVLI. Topologically, residues 567 to 605 are cytoplasmic; it reads KITMKGGSDDDELMLRLAIDKCIQTSIPTCETTIDIDRI.

The protein localises to the endoplasmic reticulum membrane. This Saccharomyces cerevisiae (strain ATCC 204508 / S288c) (Baker's yeast) protein is Protein ZRG17 (ZRG17).